A 501-amino-acid chain; its full sequence is Glucose-6-phosphate exchanger SLC37A2 (501 aa).

The chain crosses the membrane as a helical span at residues 19–39 (SWFRGFILLLTFLIYACYHMS). N-linked (GlcNAc...) asparagine glycosylation is found at Asn53, Asn62, and Asn68. Helical transmembrane passes span 88-108 (GAVD…SGIF), 118-140 (LSAG…FWNI), 142-164 (MLWY…WPSV), 179-199 (FIMG…SLIA), and 210-230 (SFIV…LFLI). The span at 240 to 252 (PPRHHDDPEKEQD) shows a compositional bias: basic and acidic residues. Residues 240–266 (PPRHHDDPEKEQDNPEDPVNSPYSSRE) form a disordered region. A run of 6 helical transmembrane segments spans residues 303–323 (CLLF…LYIF), 334–354 (GDLS…AGLI), 362–382 (ATTC…YNYI), 391–411 (IVML…ITTA), 434–454 (AIID…AGLI), and 462–482 (VFYM…RLVY).

It belongs to the major facilitator superfamily. Organophosphate:Pi antiporter (OPA) (TC 2.A.1.4) family. As to expression, highly expressed in bone marrow derived macrophages, and weakly in spleen.

The protein resides in the endoplasmic reticulum membrane. It catalyses the reaction D-glucose 6-phosphate(in) + phosphate(out) = D-glucose 6-phosphate(out) + phosphate(in). Inhibited by vanadate but not by chlorogenic acid. Inorganic phosphate and glucose-6-phosphate antiporter. May transport cytoplasmic glucose-6-phosphate into the lumen of the endoplasmic reticulum and translocate inorganic phosphate into the opposite direction. Independent of a lumenal glucose-6-phosphatase. May not play a role in homeostatic regulation of blood glucose levels. The sequence is that of Glucose-6-phosphate exchanger SLC37A2 from Mus musculus (Mouse).